The sequence spans 540 residues: Chaperonin GroEL 1 (540 aa).

ATP-binding positions include 30–33 (TLGP), lysine 51, 87–91 (DGTTT), glycine 415, 480–482 (NAA), and aspartate 496.

It belongs to the chaperonin (HSP60) family. In terms of assembly, forms a cylinder of 14 subunits composed of two heptameric rings stacked back-to-back. Interacts with the co-chaperonin GroES.

The protein resides in the cytoplasm. It catalyses the reaction ATP + H2O + a folded polypeptide = ADP + phosphate + an unfolded polypeptide.. In terms of biological role, together with its co-chaperonin GroES, plays an essential role in assisting protein folding. The GroEL-GroES system forms a nano-cage that allows encapsulation of the non-native substrate proteins and provides a physical environment optimized to promote and accelerate protein folding. The sequence is that of Chaperonin GroEL 1 from Bradyrhizobium diazoefficiens (strain JCM 10833 / BCRC 13528 / IAM 13628 / NBRC 14792 / USDA 110).